Reading from the N-terminus, the 885-residue chain is Dipeptidyl peptidase 9 (885 aa).

Active-site charge relay system residues include serine 752, aspartate 830, and histidine 862. Serine 752 lines the Val-boroPro pocket.

This sequence belongs to the peptidase S9B family. DPPIV subfamily. Homodimer. Forms a ternary complex with NLRP1, composed of a DPP9 homodimer, one full-length NLRP1 protein, and one cleaved C-terminus of NLRP1 (NACHT, LRR and PYD domains-containing protein 1, C-terminus).

It localises to the nucleus. It catalyses the reaction Release of an N-terminal dipeptide, Xaa-Yaa-|-Zaa-, from a polypeptide, preferentially when Yaa is Pro, provided Zaa is neither Pro nor hydroxyproline.. In terms of biological role, dipeptidyl peptidase that cleaves off N-terminal dipeptides from proteins having a Pro or Ala residue at position 2. Acts as a key inhibitor of the NLRP1 inflammasome. The polypeptide is Dipeptidyl peptidase 9 (Danio rerio (Zebrafish)).